A 344-amino-acid polypeptide reads, in one-letter code: RNA-binding protein squid (344 aa).

Positions 1–55 (MAENKQVDTEINGEDFTKDVTADGPGSENGDAGAAGSTNGSSDNQSAASGQRDDD) are disordered. Residues 36–49 (GSTNGSSDNQSAAS) show a composition bias toward polar residues. 2 RRM domains span residues 56 to 138 (RKLF…HGKI) and 136 to 213 (GKIF…RATP). Ser-148 carries the post-translational modification Phosphoserine. 2 disordered regions span residues 214-238 (KPEN…RGGY) and 301-344 (GGGG…HQPY). The segment at 215–254 (PENQMMGGMRGGPRGGMRGGRGGYGGRGGYNNQWDGQGSY) is M9-like motif. 2 stretches are compositionally biased toward gly residues: residues 222 to 238 (GMRG…RGGY) and 301 to 337 (GGGG…GGGR). The segment at 300-338 (GGGGGGNMGGGRGGPRGGGGPKGGGGFNGGKQRGGGGRQ) is M9 motif.

Interacts with bru1/Bruno; the interaction is direct but weak, and may play a role in regulation of grk mRNA localization and translation. As to quaternary structure, interacts (probably via M9 and M9-like motifs) with Tnpo/Transportin; the interaction is direct and is involved in nuclear localization. Interacts with fs(1)K10 (via N-terminus); may be involved in localization of sqd in the oocyte during oogenesis. In terms of assembly, interacts (via C-terminus) with Hrb27C; the interaction is RNA dependent. Does not interact with Tnpo/Transportin. Interacts with fs(1)K10 (via N-terminus); may be involved in localization of sqd in the oocyte during oogenesis. Interacts (probably via M9-like motif) with Tnpo/Transportin; the interaction is direct and is involved in nuclear localization. Interacts with fs(1)K10 (via N-terminus); may be involved in localization of sqd in the oocyte during oogenesis.

The protein resides in the nucleus. The protein localises to the cytoplasm. Its function is as follows. Component of ribonucleosomes. Could be needed to organize a concentration gradient of a dorsalizing morphogen (Dm) originating in the germinal vesicle. At least one of the isoforms is essential in somatic tissues. Interacts with grk mRNA (via 3' UTR) and involved in its localization to the dorsal anterior region of the oocyte during dorsal-ventral axis determination; may function as a ribonuclear protein complex together with otu and Hrb27C. Required for polytene chromosome dispersal in nurse cells during oogenesis; nuclear isoforms play a greater role in this than cytoplasmic isoforms. Functionally, required nonredundantly with isoform A/sqdA for dorsoventral pattern determination during oogenesis. May be important in somatic tissues. Required nonredundantly with isoform B/SqdS for dorsoventral pattern determination during oogenesis. In terms of biological role, may lack a role in dorsoventral pattern determination during oogenesis. May be important in somatic tissues. The polypeptide is RNA-binding protein squid (Drosophila melanogaster (Fruit fly)).